A 129-amino-acid chain; its full sequence is MARDKTRIKRKERKNIATGVAHVNSSFNNTKILISDVQGNAISWSSAGTMGFKGSRKSTPYAAQMAAEDAGKKAQEHGVRTLEVEVQGPGSGRESALRALAAVGFNITAIRDVTPIAHNGCRPPKRRRV.

It belongs to the universal ribosomal protein uS11 family. In terms of assembly, part of the 30S ribosomal subunit. Interacts with proteins S7 and S18. Binds to IF-3.

Located on the platform of the 30S subunit, it bridges several disparate RNA helices of the 16S rRNA. Forms part of the Shine-Dalgarno cleft in the 70S ribosome. The protein is Small ribosomal subunit protein uS11 of Paracoccus denitrificans (strain Pd 1222).